Here is an 84-residue protein sequence, read N- to C-terminus: Toxin Ts4 (84 aa).

An N-terminal signal peptide occupies residues 1 to 19 (MKRMILFISCLLLIDIVVG). Residues 21 to 82 (REGYPADSKG…IWTSETNKCG (62 aa)) form the LCN-type CS-alpha/beta domain. Disulfide bonds link cysteine 31–cysteine 81, cysteine 35–cysteine 57, cysteine 43–cysteine 62, and cysteine 47–cysteine 64. A Cysteine amide modification is found at cysteine 81. Residues 82 to 84 (GKK) constitute a propeptide that is removed on maturation.

It belongs to the long (4 C-C) scorpion toxin superfamily. Sodium channel inhibitor family. Alpha subfamily. Expressed by the venom gland.

Its subcellular location is the secreted. Not toxic. Induces an immune response similar to that induced by whole venom. Induces a dose dependent release of the neurotransmitters glutamic acid and gamma aminobutyric acid from rat brain synaptosomes. Thus, polyclonal antibodies raised against this protein can neutralize the effects of the venom. This is Toxin Ts4 from Tityus serrulatus (Brazilian scorpion).